Consider the following 575-residue polypeptide: V-type ATP synthase alpha chain (575 aa).

Residue 238 to 245 participates in ATP binding; the sequence is GPFGAGKT.

Belongs to the ATPase alpha/beta chains family.

It catalyses the reaction ATP + H2O + 4 H(+)(in) = ADP + phosphate + 5 H(+)(out). Its function is as follows. Produces ATP from ADP in the presence of a proton gradient across the membrane. The V-type alpha chain is a catalytic subunit. The protein is V-type ATP synthase alpha chain of Borrelia garinii subsp. bavariensis (strain ATCC BAA-2496 / DSM 23469 / PBi) (Borreliella bavariensis).